The primary structure comprises 427 residues: Trigger factor (427 aa).

The PPIase FKBP-type domain maps to 160 to 240 (TDTVIGDVEK…VKEVKRLELP (81 aa)).

It belongs to the FKBP-type PPIase family. Tig subfamily.

The protein localises to the cytoplasm. It carries out the reaction [protein]-peptidylproline (omega=180) = [protein]-peptidylproline (omega=0). Functionally, involved in protein export. Acts as a chaperone by maintaining the newly synthesized protein in an open conformation. Functions as a peptidyl-prolyl cis-trans isomerase. The sequence is that of Trigger factor from Chlorobium phaeobacteroides (strain DSM 266 / SMG 266 / 2430).